The chain runs to 1074 residues: Phospholipase D1 (1074 aa).

In terms of domain architecture, PX spans 81–212; that stretch reads IKAQVLEVER…TEFLDVSQLS (132 aa). Positions 219 to 328 constitute a PH domain; the sequence is PKGLEGMIMK…WGGAIEEFIR (110 aa). S-palmitoyl cysteine attachment occurs at residues Cys-240 and Cys-241. One can recognise a PLD phosphodiesterase 1 domain in the interval 459-486; it reads YLWAHHEKLVIIDQSVAFVGGIDLAYGR. The segment at 463–928 is catalytic; the sequence is HHEKLVIIDQ…MLGKRDSEMA (466 aa). Phosphoserine occurs at positions 499, 561, and 629. In terms of domain architecture, PLD phosphodiesterase 2 spans 891–918; that stretch reads ELIYVHSKLLIADDNTVIIGSANINDRS.

It belongs to the phospholipase D family. In terms of assembly, interacts with PIP5K1B. As to expression, expressed in kidney, lung, and at a much lower levels, in brain, liver, heart, testis and spleen.

Its subcellular location is the cytoplasm. It is found in the perinuclear region. It localises to the endoplasmic reticulum membrane. The protein localises to the golgi apparatus membrane. The protein resides in the late endosome membrane. The enzyme catalyses a 1,2-diacyl-sn-glycero-3-phosphocholine + H2O = a 1,2-diacyl-sn-glycero-3-phosphate + choline + H(+). It catalyses the reaction ethanol + a 1,2-diacyl-sn-glycero-3-phosphocholine = 1,2-diacyl-sn-glycero-3-phosphoethanol + choline. The catalysed reaction is 1,2-dihexadecanoyl-sn-glycero-3-phosphocholine + H2O = 1,2-dihexadecanoyl-sn-glycero-3-phosphate + choline + H(+). Its activity is regulated as follows. Stimulated by phosphatidylinositol 4,5-bisphosphate and phosphatidylinositol 3,4,5-trisphosphate, activated by the phosphokinase C-alpha, by the ADP-ribosylation factor-1 (ARF-1), and to a lesser extent by GTP-binding proteins: RHO A, RAC-1 and CDC42. Inhibited by oleate. Its function is as follows. Function as phospholipase selectivefor phosphatidylcholine. Implicated as a critical step in numerous cellular pathways, including signal transduction, membrane trafficking, and the regulation of mitosis. May be involved in the regulation of perinuclear intravesicular membrane traffic. This Mus musculus (Mouse) protein is Phospholipase D1.